Consider the following 287-residue polypeptide: GPN-loop GTPase 3 (287 aa).

GTP is bound at residue 12-17 (GAGKST). The Gly-Pro-Asn (GPN)-loop; involved in dimer interface signature appears at 69 to 71 (GPN). Residue 172–175 (SKMD) participates in GTP binding.

The protein belongs to the GPN-loop GTPase family. Heterodimers with GPN1 or GPN2. Binds to RNA polymerase II (RNAPII).

Its function is as follows. Small GTPase required for proper nuclear import of RNA polymerase II and III (RNAPII and RNAPIII). May act at an RNAP assembly step prior to nuclear import. The protein is GPN-loop GTPase 3 of Cryptococcus neoformans var. neoformans serotype D (strain B-3501A) (Filobasidiella neoformans).